The sequence spans 66 residues: Large ribosomal subunit protein uL29 (66 aa).

Belongs to the universal ribosomal protein uL29 family.

The chain is Large ribosomal subunit protein uL29 from Helicobacter pylori (strain Shi470).